We begin with the raw amino-acid sequence, 155 residues long: 2-C-methyl-D-erythritol 2,4-cyclodiphosphate synthase (155 aa).

The a divalent metal cation site is built by Asp8 and His10. Residues 8–10 (DVH) and 34–35 (HS) each bind 4-CDP-2-C-methyl-D-erythritol 2-phosphate. His42 contacts a divalent metal cation. 4-CDP-2-C-methyl-D-erythritol 2-phosphate is bound by residues 56–58 (DIG), 61–65 (FPDSD), 132–135 (TTEE), Phe139, and Arg142.

Belongs to the IspF family. As to quaternary structure, homotrimer. The cofactor is a divalent metal cation.

It carries out the reaction 4-CDP-2-C-methyl-D-erythritol 2-phosphate = 2-C-methyl-D-erythritol 2,4-cyclic diphosphate + CMP. Its pathway is isoprenoid biosynthesis; isopentenyl diphosphate biosynthesis via DXP pathway; isopentenyl diphosphate from 1-deoxy-D-xylulose 5-phosphate: step 4/6. Its function is as follows. Involved in the biosynthesis of isopentenyl diphosphate (IPP) and dimethylallyl diphosphate (DMAPP), two major building blocks of isoprenoid compounds. Catalyzes the conversion of 4-diphosphocytidyl-2-C-methyl-D-erythritol 2-phosphate (CDP-ME2P) to 2-C-methyl-D-erythritol 2,4-cyclodiphosphate (ME-CPP) with a corresponding release of cytidine 5-monophosphate (CMP). This Clostridium acetobutylicum (strain ATCC 824 / DSM 792 / JCM 1419 / IAM 19013 / LMG 5710 / NBRC 13948 / NRRL B-527 / VKM B-1787 / 2291 / W) protein is 2-C-methyl-D-erythritol 2,4-cyclodiphosphate synthase.